The chain runs to 140 residues: Ribosome-binding factor A (140 aa).

Positions 115-140 (EDERQQRGDIPPGSDQQPGSDEQPTG) are disordered. Polar residues predominate over residues 128-140 (SDQQPGSDEQPTG).

It belongs to the RbfA family. Monomer. Binds 30S ribosomal subunits, but not 50S ribosomal subunits or 70S ribosomes.

The protein resides in the cytoplasm. One of several proteins that assist in the late maturation steps of the functional core of the 30S ribosomal subunit. Associates with free 30S ribosomal subunits (but not with 30S subunits that are part of 70S ribosomes or polysomes). Required for efficient processing of 16S rRNA. May interact with the 5'-terminal helix region of 16S rRNA. In Synechococcus sp. (strain CC9605), this protein is Ribosome-binding factor A.